We begin with the raw amino-acid sequence, 402 residues long: MSRLVSFASLLAAVNAHGYVQNIVVNGVYYSGWEINTYPYMTDPPVVAAWQIPNSNGPVDVSNGYTTEDIICNLNATNAAGYVEVAAGDKINLQWSAWPDTHHGPVISYLADCGDDCTTVDKTTLEFFKIDAVGLVDDSTVPGTWGDDELIENNNSWMVEIPTSIAPGNYVLRHEIIALHSAGTEGGAQNYPQCFNLKVTGSGTDSPAGTLGTELYNLDDPGILVNIYASLSTYVIPGPTLYSGATSIAQATSAITATGSATSGAGGAAATGSSAATTTAAAASTTATPTTAAAQTAKSASAPSSAATGSVPAAPTTATVSTTTSIATSVGTTLTRTTLATTTTAAAAEPSASAPAPSGNSASGSNPLYAQCGGLNFKGASGCVAGATCKKMNPYYSQCVSA.

The signal sequence occupies residues 1–16 (MSRLVSFASLLAAVNA). Histidine 17 serves as a coordination point for Cu(2+). Intrachain disulfides connect cysteine 72/cysteine 194 and cysteine 113/cysteine 117. Asparagine 75 carries N-linked (GlcNAc...) asparagine glycosylation. Histidine 102 is a Cu(2+) binding site. Asparagine 154 carries N-linked (GlcNAc...) asparagine glycosylation. Residues histidine 180 and glutamine 189 each contribute to the O2 site. Tyrosine 191 is a Cu(2+) binding site. In terms of domain architecture, CBM1 spans 364–400 (GSNPLYAQCGGLNFKGASGCVAGATCKKMNPYYSQCV).

This sequence belongs to the polysaccharide monooxygenase AA9 family. Cu(2+) is required as a cofactor.

It is found in the secreted. It carries out the reaction [(1-&gt;4)-beta-D-glucosyl]n+m + reduced acceptor + O2 = 4-dehydro-beta-D-glucosyl-[(1-&gt;4)-beta-D-glucosyl]n-1 + [(1-&gt;4)-beta-D-glucosyl]m + acceptor + H2O.. In terms of biological role, lytic polysaccharide monooxygenase (LPMO) that depolymerizes crystalline and amorphous polysaccharides via the oxidation of scissile alpha- or beta-(1-4)-glycosidic bonds, yielding C1 or C4 oxidation products. Catalysis by LPMOs requires the reduction of the active-site copper from Cu(II) to Cu(I) by a reducing agent and H(2)O(2) or O(2) as a cosubstrate. In Emericella nidulans (strain FGSC A4 / ATCC 38163 / CBS 112.46 / NRRL 194 / M139) (Aspergillus nidulans), this protein is AA9 family lytic polysaccharide monooxygenase E.